The chain runs to 362 residues: Phosphoserine aminotransferase (362 aa).

L-glutamate contacts are provided by S9 and R42. Residues 76–77 (GR), W102, T153, D174, and Q197 contribute to the pyridoxal 5'-phosphate site. N6-(pyridoxal phosphate)lysine is present on K198. Residue 239 to 240 (NT) coordinates pyridoxal 5'-phosphate.

This sequence belongs to the class-V pyridoxal-phosphate-dependent aminotransferase family. SerC subfamily. In terms of assembly, homodimer. Pyridoxal 5'-phosphate serves as cofactor.

It is found in the cytoplasm. It catalyses the reaction O-phospho-L-serine + 2-oxoglutarate = 3-phosphooxypyruvate + L-glutamate. The catalysed reaction is 4-(phosphooxy)-L-threonine + 2-oxoglutarate = (R)-3-hydroxy-2-oxo-4-phosphooxybutanoate + L-glutamate. The protein operates within amino-acid biosynthesis; L-serine biosynthesis; L-serine from 3-phospho-D-glycerate: step 2/3. It functions in the pathway cofactor biosynthesis; pyridoxine 5'-phosphate biosynthesis; pyridoxine 5'-phosphate from D-erythrose 4-phosphate: step 3/5. In terms of biological role, catalyzes the reversible conversion of 3-phosphohydroxypyruvate to phosphoserine and of 3-hydroxy-2-oxo-4-phosphonooxybutanoate to phosphohydroxythreonine. The chain is Phosphoserine aminotransferase from Salmonella newport (strain SL254).